A 130-amino-acid polypeptide reads, in one-letter code: Small ribosomal subunit protein uS9 (130 aa).

The protein belongs to the universal ribosomal protein uS9 family.

In Bacillus mycoides (strain KBAB4) (Bacillus weihenstephanensis), this protein is Small ribosomal subunit protein uS9.